Reading from the N-terminus, the 414-residue chain is MFQALAKASAALGPRAAGWVRTMASHQLLVAPPKALLKPLSIPTRLLLGPGPSNLPPRTMAAGGLQMLGHMHKETYQIMDEIKEGIQYVFQTRNPLTLVISGSGHCALEAALINVLEPGDSFLVGVNGIWGQRAADIGERLGARVHPMTKDPGGHYTLQEVEEGLAQHKPVLLFLTHGESSSGVLQPLDGFGELCHRYKCLLLVDSVASLGGAPLYMDQQGIDILYSGSQKVLNAPPGTSLLSFSDTAKNKIYSRKTKPSSFYLDVKYLANLWGCDGQPRMYHHTTPVVSLYSLREGLALLSEQGLENSWRKHREAAAYLHGRLQALGLRLFVKDPALRLPTVTTVAVPTGYDWRDIVSYLIERFGIEITGGLGPSTGKVLRIGLMGCNATRENVDLVTEALREALQHCPKKKL.

The N-terminal 23 residues, 1–23 (MFQALAKASAALGPRAAGWVRTM), are a transit peptide targeting the mitochondrion. N6-(pyridoxal phosphate)lysine is present on K231. K256 and K334 each carry N6-acetyllysine. A substrate-binding site is contributed by R382.

The protein belongs to the class-V pyridoxal-phosphate-dependent aminotransferase family. As to quaternary structure, homodimer. Pyridoxal 5'-phosphate is required as a cofactor.

The protein localises to the peroxisome. The protein resides in the mitochondrion matrix. It catalyses the reaction L-serine + pyruvate = 3-hydroxypyruvate + L-alanine. The enzyme catalyses glyoxylate + L-alanine = glycine + pyruvate. Its function is as follows. Catalyzes the transamination of glyoxylate to glycine and contributes to the glyoxylate detoxification. In terms of biological role, catalyzes the transamination between L-serine and pyruvate and weakly contributes to gluconeogenesis from the L-serine metabolism. The protein is Alanine--glyoxylate aminotransferase of Callithrix jacchus (White-tufted-ear marmoset).